Here is a 171-residue protein sequence, read N- to C-terminus: MKAIKKEFNKKAPLLEEKVVKINRITKVVKGGARFRFSALVVVGDKKGQIGFATAKAKEIVEAIKKALEKAKKQLVRIPITGTTIPHDTIGRFGASKFFLKPASKGTGIVAGGKAARTILELVGINDVLTKTFGSRTSINVIRAVMDGLQSLRTKEEVAKLRGITLAKKEQ.

Positions L15 to I78 constitute an S5 DRBM domain.

Belongs to the universal ribosomal protein uS5 family. In terms of assembly, part of the 30S ribosomal subunit. Contacts proteins S4 and S8.

Functionally, with S4 and S12 plays an important role in translational accuracy. In terms of biological role, located at the back of the 30S subunit body where it stabilizes the conformation of the head with respect to the body. This is Small ribosomal subunit protein uS5 from Onion yellows phytoplasma (strain OY-M).